A 2237-amino-acid polypeptide reads, in one-letter code: Activating signal cointegrator 1 complex subunit 3-like (2237 aa).

4 disordered regions span residues 1–48, 71–118, 242–330, and 445–472; these read MSEE…RGEM, TIEK…KPID, DEEE…SKLI, and EKTIEKTESNKKDVEMKQQQQQQQDEIK. Basic and acidic residues predominate over residues 24-37; it reads ERNRSELKEPKGEP. Polar residues predominate over residues 79 to 97; the sequence is VNSSNDTYSTTKKVKNQNP. Positions 105 to 114 are enriched in low complexity; that stretch reads RKSNGNNNNE. The span at 242 to 282 shows a compositional bias: acidic residues; sequence DEEEEEENLSDFEIRDDDDDDDDVDNNEVDDNNNNDSEAQD. Composition is skewed to basic and acidic residues over residues 312-325 and 446-460; these read QKPDTKNTKDDKNN and KTIEKTESNKKDVEM. The stretch at 440–468 forms a coiled coil; sequence TAATTEKTIEKTESNKKDVEMKQQQQQQQ. The region spanning 561 to 745 is the Helicase ATP-binding 1 domain; it reads DCAFKTDNNL…FLRVEPDGVF (185 aa). 574-581 contacts ATP; it reads APTSSGKT. Residues 687–690 carry the DEAH box motif; sequence DEIH. A Helicase C-terminal 1 domain is found at 755–990; the sequence is PLEQQYIGIS…TVRDAVNWLG (236 aa). In terms of domain architecture, SEC63 1 spans 1050–1356; sequence STELGKVASH…GAEYSLPISF (307 aa). One can recognise a Helicase ATP-binding 2 domain in the interval 1407-1584; it reads NCMYQSNDNA…WIGATPQTCY (178 aa). 1420–1427 contacts ATP; the sequence is APTNSGKT. Residues 1526 to 1529 carry the DEAH box motif; that stretch reads DELH. In terms of domain architecture, Helicase C-terminal 2 spans 1657–1832; the sequence is TLTKPYLVCE…TITKKQDALD (176 aa). Positions 1892 to 2215 constitute an SEC63 2 domain; that stretch reads PLNLGIIASY…GCDQEHELNI (324 aa).

The protein belongs to the helicase family.

This is Activating signal cointegrator 1 complex subunit 3-like (ascc3l) from Dictyostelium discoideum (Social amoeba).